We begin with the raw amino-acid sequence, 346 residues long: UDP-N-acetylenolpyruvoylglucosamine reductase (346 aa).

The region spanning 18-189 (LRAQARAFIA…VSVVFALKTH (172 aa)) is the FAD-binding PCMH-type domain. Residue R165 is part of the active site. S240 serves as the catalytic Proton donor. E336 is an active-site residue.

This sequence belongs to the MurB family. Requires FAD as cofactor.

The protein localises to the cytoplasm. It carries out the reaction UDP-N-acetyl-alpha-D-muramate + NADP(+) = UDP-N-acetyl-3-O-(1-carboxyvinyl)-alpha-D-glucosamine + NADPH + H(+). Its pathway is cell wall biogenesis; peptidoglycan biosynthesis. In terms of biological role, cell wall formation. The chain is UDP-N-acetylenolpyruvoylglucosamine reductase from Neisseria meningitidis serogroup B (strain ATCC BAA-335 / MC58).